Here is a 110-residue protein sequence, read N- to C-terminus: Large ribosomal subunit protein uL22 (110 aa).

It belongs to the universal ribosomal protein uL22 family. As to quaternary structure, part of the 50S ribosomal subunit.

This protein binds specifically to 23S rRNA; its binding is stimulated by other ribosomal proteins, e.g. L4, L17, and L20. It is important during the early stages of 50S assembly. It makes multiple contacts with different domains of the 23S rRNA in the assembled 50S subunit and ribosome. Functionally, the globular domain of the protein is located near the polypeptide exit tunnel on the outside of the subunit, while an extended beta-hairpin is found that lines the wall of the exit tunnel in the center of the 70S ribosome. The polypeptide is Large ribosomal subunit protein uL22 (Aggregatibacter actinomycetemcomitans (Actinobacillus actinomycetemcomitans)).